The following is a 208-amino-acid chain: GTP cyclohydrolase 1 (208 aa).

The Zn(2+) site is built by C89, H92, and C163.

It belongs to the GTP cyclohydrolase I family. As to quaternary structure, homomer.

The enzyme catalyses GTP + H2O = 7,8-dihydroneopterin 3'-triphosphate + formate + H(+). It functions in the pathway cofactor biosynthesis; 7,8-dihydroneopterin triphosphate biosynthesis; 7,8-dihydroneopterin triphosphate from GTP: step 1/1. This Saccharolobus islandicus (strain Y.N.15.51 / Yellowstone #2) (Sulfolobus islandicus) protein is GTP cyclohydrolase 1.